We begin with the raw amino-acid sequence, 263 residues long: 4-hydroxy-tetrahydrodipicolinate reductase (263 aa).

NAD(+) is bound by residues 8-13, Asp-34, 99-101, and 125-128; these read GACGRM, GTT, and SPNY. Catalysis depends on His-157, which acts as the Proton donor/acceptor. His-158 is a binding site for (S)-2,3,4,5-tetrahydrodipicolinate. Lys-161 (proton donor) is an active-site residue. Residue 167 to 168 participates in (S)-2,3,4,5-tetrahydrodipicolinate binding; it reads GT.

This sequence belongs to the DapB family.

Its subcellular location is the cytoplasm. It catalyses the reaction (S)-2,3,4,5-tetrahydrodipicolinate + NAD(+) + H2O = (2S,4S)-4-hydroxy-2,3,4,5-tetrahydrodipicolinate + NADH + H(+). It carries out the reaction (S)-2,3,4,5-tetrahydrodipicolinate + NADP(+) + H2O = (2S,4S)-4-hydroxy-2,3,4,5-tetrahydrodipicolinate + NADPH + H(+). Its pathway is amino-acid biosynthesis; L-lysine biosynthesis via DAP pathway; (S)-tetrahydrodipicolinate from L-aspartate: step 4/4. Its function is as follows. Catalyzes the conversion of 4-hydroxy-tetrahydrodipicolinate (HTPA) to tetrahydrodipicolinate. This chain is 4-hydroxy-tetrahydrodipicolinate reductase, found in Methanosarcina mazei (strain ATCC BAA-159 / DSM 3647 / Goe1 / Go1 / JCM 11833 / OCM 88) (Methanosarcina frisia).